A 217-amino-acid chain; its full sequence is Phosphatidylinositol phosphate synthase (217 aa).

The next 2 helical transmembrane spans lie at 28–49 and 55–74; these read LTPD…LTLF and FAGA…DGAM. Residue 31-34 participates in a CDP-1,2-diacyl-sn-glycerol binding; the sequence is DVVT. 2 residues coordinate Mg(2+): D68 and D71. Residues G72, R76, and T82 each coordinate a CDP-1,2-diacyl-sn-glycerol. Mg(2+) is bound by residues D89 and D93. The active-site Proton acceptor is the D93. 4 helical membrane passes run 95–112, 118–136, 156–173, and 179–200; these read ISDG…AFHM, VIAT…YIKA, LIIV…FVPW, and VGMW…HTVW.

The protein belongs to the CDP-alcohol phosphatidyltransferase class-I family. As to quaternary structure, homodimer. Mg(2+) is required as a cofactor.

It localises to the cell membrane. The catalysed reaction is a CDP-1,2-diacyl-sn-glycerol + 1D-myo-inositol 3-phosphate = a 1,2-diacyl-sn-glycero-3-phospho-(1D-myo-inositol-3-phosphate) + CMP + H(+). The enzyme catalyses 1,2-di-(9Z-octadecenoyl)-sn-glycero-3-cytidine-5'-diphosphate + 1D-myo-inositol 3-phosphate = 1,2-di-(9Z-octadecenoyl)-sn-glycero-3-phospho-(1D-myo-inositol-3-phosphate) + CMP + H(+). It participates in phospholipid metabolism; phosphatidylinositol phosphate biosynthesis. With respect to regulation, competitively inhibited by several inositol 1-phosphate analogs, including the phosphonate analog 1-deoxy-1-phosphonomethyl-myo-inositol (Ino-C-P). Functionally, catalyzes the conjugation of the 1'-hydroxyl group of D-myo-inositol-3-phosphate (also named L-myo-inositol-1-phosphate) with a lipid tail of cytidine diphosphate diacylglycerol (CDP-DAG), forming phosphatidylinositol phosphate (PIP) and CMP. PIP is a precursor of phosphatidylinositol (PI) which is an essential lipid for mycobacteria required for formation of their cell wall. The sequence is that of Phosphatidylinositol phosphate synthase from Mycobacterium bovis (strain BCG / Pasteur 1173P2).